Consider the following 841-residue polypeptide: Protein translocase subunit SecA (841 aa).

ATP-binding positions include Gln-87, 105–109 (GEGKT), and Asp-494. Zn(2+) contacts are provided by Cys-825, Cys-827, Cys-836, and Cys-837.

It belongs to the SecA family. In terms of assembly, monomer and homodimer. Part of the essential Sec protein translocation apparatus which comprises SecA, SecYEG and auxiliary proteins SecDF-YajC and YidC. Zn(2+) serves as cofactor.

It is found in the cell inner membrane. Its subcellular location is the cytoplasm. It carries out the reaction ATP + H2O + cellular proteinSide 1 = ADP + phosphate + cellular proteinSide 2.. Its function is as follows. Part of the Sec protein translocase complex. Interacts with the SecYEG preprotein conducting channel. Has a central role in coupling the hydrolysis of ATP to the transfer of proteins into and across the cell membrane, serving as an ATP-driven molecular motor driving the stepwise translocation of polypeptide chains across the membrane. The protein is Protein translocase subunit SecA of Syntrophus aciditrophicus (strain SB).